Here is a 326-residue protein sequence, read N- to C-terminus: DNA-directed RNA polymerase subunit alpha (326 aa).

Residues 1 to 231 (MQSNSLLKPR…DQLSVFADLE (231 aa)) form an alpha N-terminal domain (alpha-NTD) region. The interval 245–326 (IDPVLLRPVD…WPPAGLEKLG (82 aa)) is alpha C-terminal domain (alpha-CTD).

Belongs to the RNA polymerase alpha chain family. As to quaternary structure, homodimer. The RNAP catalytic core consists of 2 alpha, 1 beta, 1 beta' and 1 omega subunit. When a sigma factor is associated with the core the holoenzyme is formed, which can initiate transcription.

It carries out the reaction RNA(n) + a ribonucleoside 5'-triphosphate = RNA(n+1) + diphosphate. Functionally, DNA-dependent RNA polymerase catalyzes the transcription of DNA into RNA using the four ribonucleoside triphosphates as substrates. This chain is DNA-directed RNA polymerase subunit alpha, found in Aromatoleum aromaticum (strain DSM 19018 / LMG 30748 / EbN1) (Azoarcus sp. (strain EbN1)).